Here is a 288-residue protein sequence, read N- to C-terminus: Structure-specific endonuclease subunit SLX1 (288 aa).

The GIY-YIG domain maps to 10–93; sequence DFYCSYLLRS…QHSYKTRFIE (84 aa). The SLX1-type zinc finger occupies 209-265; that stretch reads CMICDKKIDYIHDEGTQMVGFCSDDECDFLSCLSCLYKEFTKNSKQIIPKSGHCPNC.

It belongs to the SLX1 family. In terms of assembly, forms a heterodimer with SLX4. A divalent metal cation serves as cofactor.

The protein resides in the nucleus. In terms of biological role, catalytic subunit of the SLX1-SLX4 structure-specific endonuclease that resolves DNA secondary structures generated during DNA repair and recombination. Has endonuclease activity towards branched DNA substrates, introducing single-strand cuts in duplex DNA close to junctions with ss-DNA. The chain is Structure-specific endonuclease subunit SLX1 from Kluyveromyces lactis (strain ATCC 8585 / CBS 2359 / DSM 70799 / NBRC 1267 / NRRL Y-1140 / WM37) (Yeast).